Reading from the N-terminus, the 462-residue chain is Transcription factor-like protein EUC1 (462 aa).

Disordered regions lie at residues 11–43 (GFGG…TTSP) and 66–97 (RPTD…GRIK). Serine 17 and serine 23 each carry phosphoserine. Basic and acidic residues predominate over residues 26-35 (DSERRNHDLG). Positions 81–140 (SASATEPTNRIGPGRIKETPETNFNAFLIAQLTRMEEQNANLKEEISLMKKEQELFFLEN) are homodimerization region. Positions 105–135 (NAFLIAQLTRMEEQNANLKEEISLMKKEQEL) form a coiled coil. 2 disordered regions span residues 190 to 214 (QEAA…STNW) and 226 to 289 (GDPR…RNRR). Over residues 197–214 (NPSTSTQAHQSQSRSTNW) the composition is skewed to polar residues. A Glycyl lysine isopeptide (Lys-Gly) (interchain with G-Cter in SUMO) cross-link involves residue lysine 231. 2 positions are modified to phosphoserine: serine 237 and serine 249. Residues 240–251 (ENGEYDGNESDE) show a composition bias toward acidic residues. Over residues 252–282 (NATTRNLPLNNPDSVSNADDSNNQLDGTGNE) the composition is skewed to polar residues. Threonine 254 carries the post-translational modification Phosphothreonine. The segment at 296 to 385 (YKLNRAIQNV…QAIKVVENIR (90 aa)) is GCR1 DNA-binding region. Over residues 441-455 (SLQQPHSIPNSSTGT) the composition is skewed to polar residues. Residues 441 to 462 (SLQQPHSIPNSSTGTPEHDQDT) are disordered.

In terms of assembly, homodimer. Interacts with SLX5. In terms of processing, sumoylated at Lys-231 and subsequently ubiquitinated by the SUMO-targeted ubiquitin ligase (STUbL) complex SLX5/SLX8.

It is found in the chromosome. Functionally, transcription factor-like protein that binds to specific DNA motifs called ub-HS-motif associated with several locations where proteins other than histone H2B are ubiquitinated (ub-hotspots). Ubiquitination at these sites depends on the SUMO-targeted ubiquitin ligase (STUbL) complex SLX5/SLX8 and protein turnover on the CDC48 segregase. UBC9, SIZ1, or SIZ2 sumoylate DNA-bound EUC1 to stabilize its DNA-binding. Sumoylated EUC1 acts a cofactor required for the recruitment of the SLX5/SLX8 STUbL complex via specific contacts between EUC1 and SLX5, as well as an additional SUMO-mediated interaction. SLX5/SLX8 then ubiquitinates EUC1 and presumably other targets at ub-hotspots, and the CDC48/UFD1/NPL4 complex, together with UBX4 and UBX5, removes Lys-48-linked ubiquitinated proteins from chromatin. Ubiquitinated proteins could be either degraded by the proteasome or recycled by deubiquitination. EUC1 itself does not seem to underlie extensive turnover, as it is a very stable protein. EUC1 is able to act as a transcription factor, but its function at ub-hotspots does not seem to depend on this ability. EUC1-mediated ub-hotspots are crucial during stress responses when gene expression control is impaired. This chain is Transcription factor-like protein EUC1, found in Saccharomyces cerevisiae (strain ATCC 204508 / S288c) (Baker's yeast).